The primary structure comprises 882 residues: Alanine--tRNA ligase (882 aa).

Residues His568, His572, Cys670, and His674 each contribute to the Zn(2+) site.

This sequence belongs to the class-II aminoacyl-tRNA synthetase family. The cofactor is Zn(2+).

The protein resides in the cytoplasm. The catalysed reaction is tRNA(Ala) + L-alanine + ATP = L-alanyl-tRNA(Ala) + AMP + diphosphate. Catalyzes the attachment of alanine to tRNA(Ala) in a two-step reaction: alanine is first activated by ATP to form Ala-AMP and then transferred to the acceptor end of tRNA(Ala). Also edits incorrectly charged Ser-tRNA(Ala) and Gly-tRNA(Ala) via its editing domain. In Lactobacillus johnsonii (strain CNCM I-12250 / La1 / NCC 533), this protein is Alanine--tRNA ligase.